Consider the following 344-residue polypeptide: C-C chemokine receptor-like 2 (344 aa).

The Extracellular portion of the chain corresponds to 1–43 (MANYTLAPEDEYDVLIEGELESDEAEQCDKYDAQALSAQLVPS). A glycan (N-linked (GlcNAc...) asparagine) is linked at Asn3. A helical membrane pass occupies residues 44–64 (LCSAVFVIGVLDNLLVVLILV). The Cytoplasmic segment spans residues 65–74 (KYKGLKRVEN). The chain crosses the membrane as a helical span at residues 75-95 (IYLLNLAVSNLCFLLTLPFWA). The Extracellular portion of the chain corresponds to 96–104 (HAGGDPMCK). A disulfide bond links Cys103 and Cys181. A helical transmembrane segment spans residues 105–125 (ILIGLYFVGLYSETFFNCLLT). Over 126-144 (VQRYLVFLHKGNFFSARRR) the chain is Cytoplasmic. The chain crosses the membrane as a helical span at residues 145-165 (VPCGIITSVLAWVTAILATLP). Over 166–198 (EFVVYKPQMEDQKYKCAFSRTPFLPADETFWKH) the chain is Extracellular. The chain crosses the membrane as a helical span at residues 199–219 (FLTLKMNISVLVLPLFIFTFL). Residues 220–238 (YVQMRKTLRFREQRYSLFK) are Cytoplasmic-facing. Residues 239–259 (LVFAIMVVFLLMWAPYNIAFF) form a helical membrane-spanning segment. Residues 260 to 286 (LSTFKEHFSLSDCKSSYNLDKSVHITK) are Extracellular-facing. A helical transmembrane segment spans residues 287 to 307 (LIATTHCCINPLLYAFLDGTF). At 308-344 (SKYLCRCFHLRSNTPLQPRGQSAQGTSREEPDHSTEV) the chain is on the cytoplasmic side. The segment covering 324-333 (QPRGQSAQGT) has biased composition (polar residues). The segment at 324-344 (QPRGQSAQGTSREEPDHSTEV) is disordered. Basic and acidic residues predominate over residues 334–344 (SREEPDHSTEV).

It belongs to the G-protein coupled receptor 1 family. In terms of tissue distribution, expressed abundantly in immunal tissues such as spleen, fetal liver, lymph node and bone marrow. Strong expression also in lung and heart. Expressed in almost all hematopoietic cells including monocytes, macrophages, PMNs, T-cells (both CD4+ and CD8+), monocyte-derived iDCs, NK cells, and CD34+ progenitor cells. B-cells expressed isoform 1 but not isoform 2. Up-regulated on synovial neutrophils of rheumatoid arthritis patients.

The protein resides in the cell membrane. Receptor for CCL19 and chemerin/RARRES2. Does not appear to be a signaling receptor, but may have a role in modulating chemokine-triggered immune responses by capturing and internalizing CCL19 or by presenting RARRES2 ligand to CMKLR1, a functional signaling receptors. Plays a critical role for the development of Th2 responses. The sequence is that of C-C chemokine receptor-like 2 (CCRL2) from Homo sapiens (Human).